Reading from the N-terminus, the 20-residue chain is Phylloseptin-O1 (20 aa).

Gly-20 is subject to Glycine amide.

Expressed by the skin glands.

Its subcellular location is the secreted. Functionally, has antiprotozoal activity against T.cruzi. The polypeptide is Phylloseptin-O1 (psn4) (Pithecopus oreades (Orange-legged leaf frog)).